Reading from the N-terminus, the 421-residue chain is Serine protease HTRA2, mitochondrial (421 aa).

The helical transmembrane segment at 63-81 (VIRFFVPFSLGALASTMVA) threads the bilayer. Positions 74–77 (ALAS) match the IAP-binding motif. Positions 138 to 301 (SNGSGFVIEQ…IPIDYVKVFL (164 aa)) are serine protease. Catalysis depends on charge relay system residues histidine 156, aspartate 188, and serine 265. The 86-residue stretch at 324–409 (MGITMLTLTP…ELDIVILRGV (86 aa)) folds into the PDZ domain.

Belongs to the peptidase S1C family. In terms of assembly, interacts with th/DIAP1 (via BIR 2 domain).

It localises to the mitochondrion intermembrane space. The protein resides in the mitochondrion membrane. The enzyme catalyses Cleavage of non-polar aliphatic amino-acids at the P1 position, with a preference for Val, Ile and Met. At the P2 and P3 positions, Arg is selected most strongly with a secondary preference for other hydrophilic residues.. Serine protease that shows proteolytic activity against a non-specific substrate beta-casein. Promotes or induces cell death either by direct binding to and inhibition of BIRC proteins (also called inhibitor of apoptosis proteins, IAPs), leading to an increase in caspase activity, or by a BIRC inhibition-independent, caspase-independent and serine protease activity-dependent mechanism. Can antagonize antiapoptotic activity of th/Diap1 by directly inducing the degradation of th/Diap1. This chain is Serine protease HTRA2, mitochondrial, found in Drosophila virilis (Fruit fly).